A 654-amino-acid polypeptide reads, in one-letter code: Fructose-1,6-bisphosphatase class 3 (654 aa).

It belongs to the FBPase class 3 family. Mn(2+) serves as cofactor.

It carries out the reaction beta-D-fructose 1,6-bisphosphate + H2O = beta-D-fructose 6-phosphate + phosphate. It functions in the pathway carbohydrate biosynthesis; gluconeogenesis. This chain is Fructose-1,6-bisphosphatase class 3, found in Staphylococcus epidermidis (strain ATCC 35984 / DSM 28319 / BCRC 17069 / CCUG 31568 / BM 3577 / RP62A).